Consider the following 793-residue polypeptide: DnaJ homolog subfamily C member 10 (793 aa).

The signal sequence occupies residues 1 to 32 (MGVWLNKDDFIRDLKRISLCLLILYVVVVVGT). One can recognise a J domain in the interval 35 to 100 (NFYSLLGVSK…DLRKKYDKYG (66 aa)). Residues 130–232 (EIITLERREF…ESLVAFAMQH (103 aa)) form the Thioredoxin 1 domain. Cys158 and Cys161 are disulfide-bonded. 2 trxb regions span residues 235–350 (STVT…LPDF) and 348–463 (PDFE…PQNF). Thioredoxin domains follow at residues 454-553 (HVTT…IEDL), 557-665 (SVVS…SWGL), and 671-776 (ASID…ALIY). Cys480 and Cys483 are oxidised to a cystine. A glycan (N-linked (GlcNAc...) asparagine) is linked at Asn530. Cystine bridges form between Cys588–Cys591 and Cys700–Cys703. The Prevents secretion from ER motif lies at 790–793 (KDEL).

In terms of assembly, interacts with HSPA5 (via its J domain). Interacts with EDEM1. As to expression, ubiquitous. Particularly abundant in secretory tissues. Ubiquitous in fetal tissues and tumor tissues. Higher expression in fetal tissues than in adult tissues. Expressed in testis, pancreas, fetal thymus and fetal kidney. High expression in heart, liver, kidney, and testis. Low expression in spleen and skeletal muscle.

Its subcellular location is the endoplasmic reticulum lumen. Its function is as follows. Endoplasmic reticulum disulfide reductase involved both in the correct folding of proteins and degradation of misfolded proteins. Required for efficient folding of proteins in the endoplasmic reticulum by catalyzing the removal of non-native disulfide bonds formed during the folding of proteins, such as LDLR. Also involved in endoplasmic reticulum-associated degradation (ERAD) by reducing incorrect disulfide bonds in misfolded glycoproteins recognized by EDEM1. Interaction with HSPA5 is required its activity, not for the disulfide reductase activity, but to facilitate the release of DNAJC10 from its substrate. Promotes apoptotic signaling pathway in response to endoplasmic reticulum stress. The protein is DnaJ homolog subfamily C member 10 (Dnajc10) of Mus musculus (Mouse).